Consider the following 194-residue polypeptide: dCTP deaminase (194 aa).

DCTP contacts are provided by residues 110–115, Asp128, 136–138, Tyr171, Lys178, and Gln182; these read RSSLAR and VLE. Glu138 serves as the catalytic Proton donor/acceptor. The disordered stretch occupies residues 172-194; sequence NKRKSAKYRDQQEAVASRISQDK.

This sequence belongs to the dCTP deaminase family. Homotrimer.

The catalysed reaction is dCTP + H2O + H(+) = dUTP + NH4(+). Its pathway is pyrimidine metabolism; dUMP biosynthesis; dUMP from dCTP (dUTP route): step 1/2. In terms of biological role, catalyzes the deamination of dCTP to dUTP. The polypeptide is dCTP deaminase (Shewanella loihica (strain ATCC BAA-1088 / PV-4)).